Reading from the N-terminus, the 274-residue chain is Penicillin-insensitive murein endopeptidase (274 aa).

A signal peptide spans Met1–Ala19. 3 cysteine pairs are disulfide-bonded: Cys44/Cys265, Cys187/Cys235, and Cys216/Cys223. Zn(2+) contacts are provided by His110, His113, Asp120, Asp147, His150, and His211. The interval Asp225–Leu274 is disordered.

Belongs to the peptidase M74 family. Dimer. It depends on Zn(2+) as a cofactor.

Its subcellular location is the periplasm. Murein endopeptidase that cleaves the D-alanyl-meso-2,6-diamino-pimelyl amide bond that connects peptidoglycan strands. Likely plays a role in the removal of murein from the sacculus. The protein is Penicillin-insensitive murein endopeptidase of Salmonella paratyphi A (strain AKU_12601).